The following is a 446-amino-acid chain: Tubulin beta chain (446 aa).

The GTP site is built by Q11, E69, S138, G142, T143, G144, N204, and N226. E69 is a Mg(2+) binding site. Residues 423–446 are disordered; sequence QQYQDAGVDEEEEEYEEEPLPEDE. Positions 429–446 are enriched in acidic residues; sequence GVDEEEEEYEEEPLPEDE.

It belongs to the tubulin family. As to quaternary structure, dimer of alpha and beta chains. A typical microtubule is a hollow water-filled tube with an outer diameter of 25 nm and an inner diameter of 15 nM. Alpha-beta heterodimers associate head-to-tail to form protofilaments running lengthwise along the microtubule wall with the beta-tubulin subunit facing the microtubule plus end conferring a structural polarity. Microtubules usually have 13 protofilaments but different protofilament numbers can be found in some organisms and specialized cells. Mg(2+) serves as cofactor.

The protein localises to the cytoplasm. It localises to the cytoskeleton. In terms of biological role, tubulin is the major constituent of microtubules, a cylinder consisting of laterally associated linear protofilaments composed of alpha- and beta-tubulin heterodimers. Microtubules grow by the addition of GTP-tubulin dimers to the microtubule end, where a stabilizing cap forms. Below the cap, tubulin dimers are in GDP-bound state, owing to GTPase activity of alpha-tubulin. This Pestalotiopsis microspora protein is Tubulin beta chain (TUBB).